The following is a 350-amino-acid chain: GTPase Obg (350 aa).

One can recognise an Obg domain in the interval methionine 1–isoleucine 158. The 181-residue stretch at alanine 159 to lysine 339 folds into the OBG-type G domain. Residues glycine 165–serine 172, phenylalanine 190–threonine 194, aspartate 212–glycine 215, serine 280–aspartate 283, and serine 320–leucine 322 contribute to the GTP site. Positions 172 and 192 each coordinate Mg(2+).

The protein belongs to the TRAFAC class OBG-HflX-like GTPase superfamily. OBG GTPase family. In terms of assembly, monomer. Mg(2+) serves as cofactor.

Its subcellular location is the cytoplasm. In terms of biological role, an essential GTPase which binds GTP, GDP and possibly (p)ppGpp with moderate affinity, with high nucleotide exchange rates and a fairly low GTP hydrolysis rate. Plays a role in control of the cell cycle, stress response, ribosome biogenesis and in those bacteria that undergo differentiation, in morphogenesis control. In Campylobacter jejuni subsp. jejuni serotype O:2 (strain ATCC 700819 / NCTC 11168), this protein is GTPase Obg.